A 610-amino-acid polypeptide reads, in one-letter code: Zinc metalloproteinase-disintegrin-like 3a (610 aa).

The signal sequence occupies residues 1 to 19 (MIQVLLVTILAVFPYQGSS). A propeptide spanning residues 20-188 (IILGSGNVND…KKASQLVVTA (169 aa)) is cleaved from the precursor. A Peptidase M12B domain is found at 198-394 (RYVELVIVAD…YTPKCILNEP (197 aa)). Ca(2+) is bound at residue Glu201. An N-linked (GlcNAc...) asparagine glycan is attached at Asn217. Asp285 is a Ca(2+) binding site. Disulfide bonds link Cys309-Cys389, Cys349-Cys373, and Cys351-Cys356. Residue His334 coordinates Zn(2+). The active site involves Glu335. Zn(2+) contacts are provided by His338 and His344. Cys389, Asn392, Val404, Asn407, Glu411, Glu414, and Asp417 together coordinate Ca(2+). The region spanning 402-488 (PPVCGNELLE…DCPTDDFHKN (87 aa)) is the Disintegrin domain. Disulfide bonds link Cys405-Cys434, Cys416-Cys429, Cys418-Cys424, Cys428-Cys451, Cys442-Cys448, Cys447-Cys473, Cys460-Cys480, Cys467-Cys499, Cys492-Cys504, Cys511-Cys561, Cys526-Cys572, Cys539-Cys549, Cys556-Cys598, and Cys592-Cys603. The D/ECD-tripeptide signature appears at 466–468 (ECD).

The protein belongs to the venom metalloproteinase (M12B) family. P-III subfamily. Requires Zn(2+) as cofactor. In terms of tissue distribution, expressed by the venom gland.

The protein localises to the secreted. In terms of biological role, snake venom metalloproteinase that impairs hemostasis in the envenomed animal. This chain is Zinc metalloproteinase-disintegrin-like 3a, found in Crotalus adamanteus (Eastern diamondback rattlesnake).